The primary structure comprises 458 residues: Transcription factor ORF10 (458 aa).

The segment at residues 38–65 is a DNA-binding region (zn(2)-C6 fungal-type); it reads CESCRLKKLRCSGHKSGCDRCRSQAMKC. Residues 69 to 109 are disordered; that stretch reads IGAPSNSSRPKSRSHFQPNFSNMSGTAGTSKAPSPLGNDGV. Positions 71–100 are enriched in polar residues; the sequence is APSNSSRPKSRSHFQPNFSNMSGTAGTSKA.

It is found in the nucleus. Its function is as follows. Transcription factor that specifically regulates the expression of the gene cluster that mediates the biosynthesis of PR-toxin, a bicyclic sesquiterpene belonging to the eremophilane class and acting as a mycotoxin. This is Transcription factor ORF10 from Penicillium roqueforti (strain FM164).